The chain runs to 473 residues: MTNIQLVIKDDSNSITLNVNRDTLCSKIDYFNKMFNNFAESTKEIVSIYVLNAQIVRDLIDSKIYDREITADKKNWKYILDLYKCQDYFGIEIDSELMKDLLVPREYFGHLIDVIDLIGYNKHTVNTVVQNIPIDFNVKVFPPKLINKMVPVITDSIKVFGSKTSIDIVCLKTREIIYSLPTIGSLCNCFCYVKNKKMVFFINELSQLVAFDIRYGTSNIISLRIKKEDFNTNPYYRKNILLTDVLYRRNSDLQIIPTVNILYNKISNQLIFCHNHKHVVIIDVESYRVINMYTHSNYFDVNIDNICRYVNHNTLAINHSSNIIALWNLESYEIHTRPKPNGIINLTALIYYNTYIYKNKFQKIFVNEFYLPNKPFELKPKHSGEITFVGCSPDNKYIVIVVDYCQITIFDMEYTLSLYASCKCVSRTYIRYEYPLSIIFGSNNTMSILFETNKKNIVHVYSLKSKKSLKNYV.

A BTB domain is found at 2 to 72 (TNIQLVIKDD…KIYDREITAD (71 aa)).

Belongs to the mimivirus BTB/WD family.

The polypeptide is Putative BTB/POZ domain-containing protein R765 (Acanthamoeba polyphaga mimivirus (APMV)).